The primary structure comprises 382 residues: Anhydro-N-acetylmuramic acid kinase (382 aa).

9-16 (GTSLDGID) lines the ATP pocket.

It belongs to the anhydro-N-acetylmuramic acid kinase family.

It catalyses the reaction 1,6-anhydro-N-acetyl-beta-muramate + ATP + H2O = N-acetyl-D-muramate 6-phosphate + ADP + H(+). Its pathway is amino-sugar metabolism; 1,6-anhydro-N-acetylmuramate degradation. The protein operates within cell wall biogenesis; peptidoglycan recycling. Catalyzes the specific phosphorylation of 1,6-anhydro-N-acetylmuramic acid (anhMurNAc) with the simultaneous cleavage of the 1,6-anhydro ring, generating MurNAc-6-P. Is required for the utilization of anhMurNAc either imported from the medium or derived from its own cell wall murein, and thus plays a role in cell wall recycling. This is Anhydro-N-acetylmuramic acid kinase from Bacillus cereus (strain 03BB102).